The chain runs to 194 residues: Kallikrein-like enzyme LV-Ka (194 aa).

Cystine bridges form between cysteine 7–cysteine 99, cysteine 44–cysteine 192, cysteine 78–cysteine 146, cysteine 110–cysteine 125, and cysteine 136–cysteine 161. A Peptidase S1 domain is found at 36–185 (LNQEDKFICP…YTEWIQSIIA (150 aa)). Serine 140 (charge relay system) is an active-site residue.

This sequence belongs to the peptidase S1 family. Snake venom subfamily. Monomer. N-glycosylated. Expressed by the venom gland.

The protein resides in the secreted. Completely inhibited by the serine protease inhibitors NPGB and PMSF, partially inhibited by benzamidines, and weakly or not inhibited by SBTI and EDTA. Shows kallikrein-like activity, releasing bradykinin from kininogen. Also activates plasminogen, which is also a plasma kallikrein activity. Is active upon the kallikrein substrates S-2266 and S-2302, suggesting a preference for Arg in P1 position. In vivo, lowers blood pressure after intravenous injection in rat. In Lachesis muta muta (Bushmaster), this protein is Kallikrein-like enzyme LV-Ka.